A 230-amino-acid chain; its full sequence is 5'-methylthioadenosine/S-adenosylhomocysteine nucleosidase (230 aa).

Glutamate 12 serves as the catalytic Proton acceptor. Substrate contacts are provided by residues glycine 78, isoleucine 153, and 174–175; that span reads ME. Aspartate 198 serves as the catalytic Proton donor.

The protein belongs to the PNP/UDP phosphorylase family. MtnN subfamily.

The enzyme catalyses S-adenosyl-L-homocysteine + H2O = S-(5-deoxy-D-ribos-5-yl)-L-homocysteine + adenine. It carries out the reaction S-methyl-5'-thioadenosine + H2O = 5-(methylsulfanyl)-D-ribose + adenine. It catalyses the reaction 5'-deoxyadenosine + H2O = 5-deoxy-D-ribose + adenine. It participates in amino-acid biosynthesis; L-methionine biosynthesis via salvage pathway; S-methyl-5-thio-alpha-D-ribose 1-phosphate from S-methyl-5'-thioadenosine (hydrolase route): step 1/2. Catalyzes the irreversible cleavage of the glycosidic bond in both 5'-methylthioadenosine (MTA) and S-adenosylhomocysteine (SAH/AdoHcy) to adenine and the corresponding thioribose, 5'-methylthioribose and S-ribosylhomocysteine, respectively. Also cleaves 5'-deoxyadenosine, a toxic by-product of radical S-adenosylmethionine (SAM) enzymes, into 5-deoxyribose and adenine. This is 5'-methylthioadenosine/S-adenosylhomocysteine nucleosidase from Shewanella denitrificans (strain OS217 / ATCC BAA-1090 / DSM 15013).